The primary structure comprises 525 residues: Ribosomal protein uS12 methylthiotransferase RimO (525 aa).

Residues 1–20 (MPKISTESVNTTIAPSQPAS) show a composition bias toward polar residues. The disordered stretch occupies residues 1 to 44 (MPKISTESVNTTIAPSQPASTAPKDTATLFNPAKPTATPAQSSI). An MTTase N-terminal domain is found at 82–192 (PKIGFVSLGC…VIRAVALHVP (111 aa)). Residues Cys91, Cys127, Cys156, Cys230, Cys234, and Cys237 each contribute to the [4Fe-4S] cluster site. The Radical SAM core domain maps to 216 to 453 (LTPSHYAYLK…MTLQQDISAQ (238 aa)). The region spanning 456–525 (QEKIGKTLMV…EYDLFASYQA (70 aa)) is the TRAM domain.

Belongs to the methylthiotransferase family. RimO subfamily. The cofactor is [4Fe-4S] cluster.

The protein localises to the cytoplasm. The enzyme catalyses L-aspartate(89)-[ribosomal protein uS12]-hydrogen + (sulfur carrier)-SH + AH2 + 2 S-adenosyl-L-methionine = 3-methylsulfanyl-L-aspartate(89)-[ribosomal protein uS12]-hydrogen + (sulfur carrier)-H + 5'-deoxyadenosine + L-methionine + A + S-adenosyl-L-homocysteine + 2 H(+). Catalyzes the methylthiolation of an aspartic acid residue of ribosomal protein uS12. This Psychrobacter arcticus (strain DSM 17307 / VKM B-2377 / 273-4) protein is Ribosomal protein uS12 methylthiotransferase RimO.